The sequence spans 267 residues: Tryptophan 2,3-dioxygenase (267 aa).

Substrate is bound by residues 44-48 (FITIH) and Arg-114. His-225 is a heme binding site. Substrate is bound at residue Thr-239.

Belongs to the tryptophan 2,3-dioxygenase family. In terms of assembly, homotetramer. Heme serves as cofactor.

The catalysed reaction is L-tryptophan + O2 = N-formyl-L-kynurenine. It functions in the pathway amino-acid degradation; L-tryptophan degradation via kynurenine pathway; L-kynurenine from L-tryptophan: step 1/2. Functionally, heme-dependent dioxygenase that catalyzes the oxidative cleavage of the L-tryptophan (L-Trp) pyrrole ring and converts L-tryptophan to N-formyl-L-kynurenine. Catalyzes the oxidative cleavage of the indole moiety. In Nocardioides sp. (strain ATCC BAA-499 / JS614), this protein is Tryptophan 2,3-dioxygenase.